The sequence spans 347 residues: MNPLVFTVIMSTVMLGTAIVATSSHWLMAWIGFEMNMLAVIPILMKKYNPRSMEASTKYFLTQATASMLLMLAVTMNLVYSGQWSVTKPLSPTASTIMTLAMAMKLGLSPFHFWVPEVAQGISLPSGLILLTWQKLAPMSILYQISSTINLDLLMTLSILSIGIGGWGGLNQTQLRKIMAYSSIAHMGWMTTILAYNPTMTLLNLAIYILLTTTTFMMFMLSSTTTTLSLSHTWNKMPLLTTAILLTMLSLGGLPPLSGFMPKWMIIQELTKNDNVILPTMMAVMALLNLYFYMRLTYSTSLTMFPSTNNMKMKWQFNYAKSTTHLSPLIILSTLILPLSPMLALLE.

The next 10 membrane-spanning stretches (helical) occupy residues M1–A21, H25–M45, Y59–V79, F111–L131, I149–G169, I178–P198, T201–L221, M237–L257, V276–L296, and L326–L346.

This sequence belongs to the complex I subunit 2 family. As to quaternary structure, core subunit of respiratory chain NADH dehydrogenase (Complex I) which is composed of 45 different subunits. Interacts with TMEM242.

It localises to the mitochondrion inner membrane. It catalyses the reaction a ubiquinone + NADH + 5 H(+)(in) = a ubiquinol + NAD(+) + 4 H(+)(out). Functionally, core subunit of the mitochondrial membrane respiratory chain NADH dehydrogenase (Complex I) which catalyzes electron transfer from NADH through the respiratory chain, using ubiquinone as an electron acceptor. Essential for the catalytic activity and assembly of complex I. The polypeptide is NADH-ubiquinone oxidoreductase chain 2 (Pteropus pumilus (Little golden-mantled flying fox)).